The following is a 66-amino-acid chain: Large ribosomal subunit protein uL29 (66 aa).

It belongs to the universal ribosomal protein uL29 family. As to quaternary structure, part of the 50S ribosomal subunit.

This is Large ribosomal subunit protein uL29 from Thermococcus kodakarensis (strain ATCC BAA-918 / JCM 12380 / KOD1) (Pyrococcus kodakaraensis (strain KOD1)).